Reading from the N-terminus, the 224-residue chain is 7-cyano-7-deazaguanine synthase (224 aa).

11–21 (FSGGQDSTTCL) contacts ATP. Cys-190, Cys-199, Cys-202, and Cys-205 together coordinate Zn(2+).

Belongs to the QueC family. It depends on Zn(2+) as a cofactor.

The catalysed reaction is 7-carboxy-7-deazaguanine + NH4(+) + ATP = 7-cyano-7-deazaguanine + ADP + phosphate + H2O + H(+). Its pathway is purine metabolism; 7-cyano-7-deazaguanine biosynthesis. Catalyzes the ATP-dependent conversion of 7-carboxy-7-deazaguanine (CDG) to 7-cyano-7-deazaguanine (preQ(0)). The sequence is that of 7-cyano-7-deazaguanine synthase from Parabacteroides distasonis (strain ATCC 8503 / DSM 20701 / CIP 104284 / JCM 5825 / NCTC 11152).